Here is a 456-residue protein sequence, read N- to C-terminus: MYKSAVILAAGKGTRMKSALPKVLHKVCGKEMVNQVIDTLRKSDIEDIDLVIGNGAEEVKKATKDTHVLYSIQEEQLGTGHALMCAREFLEGKDGVVAVFTGDAPLITSETVKDCIEFHNKGEYKATILTAIVGNPFGYGRIIRDENGEVKKIVEHKDCTPEELKVNEINSGMYCFDIKELLNNLDKLNNNNSQGEYYLTDIIELLKEKGCKVGAISVNPDEIKGVNSRGQLAEAEEILRLRINERHMENGVTLIDPKNTYIGTDVEIEEDTIVYPGNVLEGKTVIKKGCVLYPNSRIKDSVIESGVEIQSSVILESHVGKNTTVGPFAYIRPESKIGEGARIGDFVEIKKSTIGNGTKVSHLTYIGDAEVGGGCNFGCGTVVVNYDGKTKNKTIIGDNSFIGCNTNLVSPVEVEDNTYIAAGSTITKKVQEGDLAIARAKQVNIKGWVAKKGLKK.

The tract at residues 1–229 is pyrophosphorylase; sequence MYKSAVILAA…PDEIKGVNSR (229 aa). UDP-N-acetyl-alpha-D-glucosamine contacts are provided by residues 8-11, Lys22, Gln73, and 78-79; these read LAAG and GT. Asp103 serves as a coordination point for Mg(2+). The UDP-N-acetyl-alpha-D-glucosamine site is built by Gly140, Glu155, Asn170, and Asn227. Asn227 contacts Mg(2+). A linker region spans residues 230 to 250; sequence GQLAEAEEILRLRINERHMEN. An N-acetyltransferase region spans residues 251 to 456; sequence GVTLIDPKNT…GWVAKKGLKK (206 aa). The UDP-N-acetyl-alpha-D-glucosamine site is built by Arg332 and Lys350. His362 serves as the catalytic Proton acceptor. 2 residues coordinate UDP-N-acetyl-alpha-D-glucosamine: Tyr365 and Asn376. Acetyl-CoA contacts are provided by residues 385 to 386, Ala422, and Arg439; that span reads NY.

In the N-terminal section; belongs to the N-acetylglucosamine-1-phosphate uridyltransferase family. The protein in the C-terminal section; belongs to the transferase hexapeptide repeat family. In terms of assembly, homotrimer. Mg(2+) is required as a cofactor.

Its subcellular location is the cytoplasm. It catalyses the reaction alpha-D-glucosamine 1-phosphate + acetyl-CoA = N-acetyl-alpha-D-glucosamine 1-phosphate + CoA + H(+). The catalysed reaction is N-acetyl-alpha-D-glucosamine 1-phosphate + UTP + H(+) = UDP-N-acetyl-alpha-D-glucosamine + diphosphate. Its pathway is nucleotide-sugar biosynthesis; UDP-N-acetyl-alpha-D-glucosamine biosynthesis; N-acetyl-alpha-D-glucosamine 1-phosphate from alpha-D-glucosamine 6-phosphate (route II): step 2/2. It functions in the pathway nucleotide-sugar biosynthesis; UDP-N-acetyl-alpha-D-glucosamine biosynthesis; UDP-N-acetyl-alpha-D-glucosamine from N-acetyl-alpha-D-glucosamine 1-phosphate: step 1/1. The protein operates within bacterial outer membrane biogenesis; LPS lipid A biosynthesis. Its function is as follows. Catalyzes the last two sequential reactions in the de novo biosynthetic pathway for UDP-N-acetylglucosamine (UDP-GlcNAc). The C-terminal domain catalyzes the transfer of acetyl group from acetyl coenzyme A to glucosamine-1-phosphate (GlcN-1-P) to produce N-acetylglucosamine-1-phosphate (GlcNAc-1-P), which is converted into UDP-GlcNAc by the transfer of uridine 5-monophosphate (from uridine 5-triphosphate), a reaction catalyzed by the N-terminal domain. This chain is Bifunctional protein GlmU, found in Clostridium novyi (strain NT).